The sequence spans 215 residues: Pyrrolidone-carboxylate peptidase (215 aa).

Active-site residues include E80, C143, and H167.

Belongs to the peptidase C15 family. As to quaternary structure, homotetramer.

It is found in the cytoplasm. The enzyme catalyses Release of an N-terminal pyroglutamyl group from a polypeptide, the second amino acid generally not being Pro.. Functionally, removes 5-oxoproline from various penultimate amino acid residues except L-proline. This chain is Pyrrolidone-carboxylate peptidase, found in Yersinia pestis bv. Antiqua (strain Antiqua).